We begin with the raw amino-acid sequence, 364 residues long: tRNA N6-adenosine threonylcarbamoyltransferase (364 aa).

Fe cation contacts are provided by His-118 and His-122. Substrate is bound by residues 140–144, Asp-173, Gly-186, and Asn-288; that span reads LVSGG. Asp-316 lines the Fe cation pocket.

This sequence belongs to the KAE1 / TsaD family. Fe(2+) serves as cofactor.

The protein localises to the cytoplasm. It catalyses the reaction L-threonylcarbamoyladenylate + adenosine(37) in tRNA = N(6)-L-threonylcarbamoyladenosine(37) in tRNA + AMP + H(+). Its function is as follows. Required for the formation of a threonylcarbamoyl group on adenosine at position 37 (t(6)A37) in tRNAs that read codons beginning with adenine. Is involved in the transfer of the threonylcarbamoyl moiety of threonylcarbamoyl-AMP (TC-AMP) to the N6 group of A37, together with TsaE and TsaB. TsaD likely plays a direct catalytic role in this reaction. This Cereibacter sphaeroides (strain ATCC 17023 / DSM 158 / JCM 6121 / CCUG 31486 / LMG 2827 / NBRC 12203 / NCIMB 8253 / ATH 2.4.1.) (Rhodobacter sphaeroides) protein is tRNA N6-adenosine threonylcarbamoyltransferase.